The sequence spans 338 residues: Holliday junction branch migration complex subunit RuvB (338 aa).

The tract at residues 1–184 is large ATPase domain (RuvB-L); the sequence is MTEEERLLSA…FGIISHMEYY (184 aa). ATP contacts are provided by residues leucine 23, arginine 24, glycine 65, lysine 68, threonine 69, threonine 70, 131–133, arginine 174, tyrosine 184, and arginine 221; that span reads EDF. Residue threonine 69 coordinates Mg(2+). The interval 185-255 is small ATPAse domain (RuvB-S); the sequence is QEQDLKEIVL…IADKALTLLQ (71 aa). A head domain (RuvB-H) region spans residues 258–338; it reads HQGLDYVDQK…GYDYLEGRKN (81 aa). DNA is bound by residues arginine 313 and arginine 318.

The protein belongs to the RuvB family. As to quaternary structure, homohexamer. Forms an RuvA(8)-RuvB(12)-Holliday junction (HJ) complex. HJ DNA is sandwiched between 2 RuvA tetramers; dsDNA enters through RuvA and exits via RuvB. An RuvB hexamer assembles on each DNA strand where it exits the tetramer. Each RuvB hexamer is contacted by two RuvA subunits (via domain III) on 2 adjacent RuvB subunits; this complex drives branch migration. In the full resolvosome a probable DNA-RuvA(4)-RuvB(12)-RuvC(2) complex forms which resolves the HJ.

It localises to the cytoplasm. The catalysed reaction is ATP + H2O = ADP + phosphate + H(+). Its function is as follows. The RuvA-RuvB-RuvC complex processes Holliday junction (HJ) DNA during genetic recombination and DNA repair, while the RuvA-RuvB complex plays an important role in the rescue of blocked DNA replication forks via replication fork reversal (RFR). RuvA specifically binds to HJ cruciform DNA, conferring on it an open structure. The RuvB hexamer acts as an ATP-dependent pump, pulling dsDNA into and through the RuvAB complex. RuvB forms 2 homohexamers on either side of HJ DNA bound by 1 or 2 RuvA tetramers; 4 subunits per hexamer contact DNA at a time. Coordinated motions by a converter formed by DNA-disengaged RuvB subunits stimulates ATP hydrolysis and nucleotide exchange. Immobilization of the converter enables RuvB to convert the ATP-contained energy into a lever motion, pulling 2 nucleotides of DNA out of the RuvA tetramer per ATP hydrolyzed, thus driving DNA branch migration. The RuvB motors rotate together with the DNA substrate, which together with the progressing nucleotide cycle form the mechanistic basis for DNA recombination by continuous HJ branch migration. Branch migration allows RuvC to scan DNA until it finds its consensus sequence, where it cleaves and resolves cruciform DNA. The sequence is that of Holliday junction branch migration complex subunit RuvB from Enterococcus faecalis (strain ATCC 700802 / V583).